The sequence spans 313 residues: tRNA dimethylallyltransferase (313 aa).

11–18 (GPTASGKT) serves as a coordination point for ATP. Residue 13-18 (TASGKT) participates in substrate binding. Interaction with substrate tRNA stretches follow at residues 36–39 (DSRQ) and 160–164 (QRLIR).

This sequence belongs to the IPP transferase family. In terms of assembly, monomer. Requires Mg(2+) as cofactor.

It carries out the reaction adenosine(37) in tRNA + dimethylallyl diphosphate = N(6)-dimethylallyladenosine(37) in tRNA + diphosphate. Catalyzes the transfer of a dimethylallyl group onto the adenine at position 37 in tRNAs that read codons beginning with uridine, leading to the formation of N6-(dimethylallyl)adenosine (i(6)A). In Chlorobaculum parvum (strain DSM 263 / NCIMB 8327) (Chlorobium vibrioforme subsp. thiosulfatophilum), this protein is tRNA dimethylallyltransferase.